Consider the following 279-residue polypeptide: HTH-type transcriptional regulator HdfR (279 aa).

The region spanning 1–58 (MDTELLKTFLEVSRTRHFGRAAESLYLTQSAVSFRIRQLENQLGVNLFTRHRNNIRLT) is the HTH lysR-type domain. The H-T-H motif DNA-binding region spans 18–37 (FGRAAESLYLTQSAVSFRIR).

The protein belongs to the LysR transcriptional regulatory family.

In terms of biological role, negatively regulates the transcription of the flagellar master operon flhDC by binding to the upstream region of the operon. This is HTH-type transcriptional regulator HdfR from Escherichia coli (strain ATCC 8739 / DSM 1576 / NBRC 3972 / NCIMB 8545 / WDCM 00012 / Crooks).